A 158-amino-acid polypeptide reads, in one-letter code: SsrA-binding protein (158 aa).

The protein belongs to the SmpB family.

It localises to the cytoplasm. In terms of biological role, required for rescue of stalled ribosomes mediated by trans-translation. Binds to transfer-messenger RNA (tmRNA), required for stable association of tmRNA with ribosomes. tmRNA and SmpB together mimic tRNA shape, replacing the anticodon stem-loop with SmpB. tmRNA is encoded by the ssrA gene; the 2 termini fold to resemble tRNA(Ala) and it encodes a 'tag peptide', a short internal open reading frame. During trans-translation Ala-aminoacylated tmRNA acts like a tRNA, entering the A-site of stalled ribosomes, displacing the stalled mRNA. The ribosome then switches to translate the ORF on the tmRNA; the nascent peptide is terminated with the 'tag peptide' encoded by the tmRNA and targeted for degradation. The ribosome is freed to recommence translation, which seems to be the essential function of trans-translation. The protein is SsrA-binding protein of Bartonella quintana (strain Toulouse) (Rochalimaea quintana).